The following is a 496-amino-acid chain: Cytochrome P450 71A15 (496 aa).

Residues Ile3–Leu23 form a helical membrane-spanning segment. Cys439 serves as a coordination point for heme.

The protein belongs to the cytochrome P450 family. Heme serves as cofactor.

It localises to the membrane. In Arabidopsis thaliana (Mouse-ear cress), this protein is Cytochrome P450 71A15 (CYP71A15).